The sequence spans 241 residues: Biosynthetic peptidoglycan transglycosylase (241 aa).

A helical membrane pass occupies residues 19-39 (AILAVLGVWIAGILLFSVMPV).

The protein belongs to the glycosyltransferase 51 family.

It localises to the cell inner membrane. The enzyme catalyses [GlcNAc-(1-&gt;4)-Mur2Ac(oyl-L-Ala-gamma-D-Glu-L-Lys-D-Ala-D-Ala)](n)-di-trans,octa-cis-undecaprenyl diphosphate + beta-D-GlcNAc-(1-&gt;4)-Mur2Ac(oyl-L-Ala-gamma-D-Glu-L-Lys-D-Ala-D-Ala)-di-trans,octa-cis-undecaprenyl diphosphate = [GlcNAc-(1-&gt;4)-Mur2Ac(oyl-L-Ala-gamma-D-Glu-L-Lys-D-Ala-D-Ala)](n+1)-di-trans,octa-cis-undecaprenyl diphosphate + di-trans,octa-cis-undecaprenyl diphosphate + H(+). It functions in the pathway cell wall biogenesis; peptidoglycan biosynthesis. In terms of biological role, peptidoglycan polymerase that catalyzes glycan chain elongation from lipid-linked precursors. This Cronobacter sakazakii (strain ATCC BAA-894) (Enterobacter sakazakii) protein is Biosynthetic peptidoglycan transglycosylase.